The following is a 284-amino-acid chain: tRNA uridine(34) hydroxylase (284 aa).

The Rhodanese domain occupies 132–226 (AGRPVVMLDT…YFEEVGGAHY (95 aa)). C186 serves as the catalytic Cysteine persulfide intermediate.

The protein belongs to the TrhO family.

The catalysed reaction is uridine(34) in tRNA + AH2 + O2 = 5-hydroxyuridine(34) in tRNA + A + H2O. Catalyzes oxygen-dependent 5-hydroxyuridine (ho5U) modification at position 34 in tRNAs. The protein is tRNA uridine(34) hydroxylase of Burkholderia orbicola (strain MC0-3).